The sequence spans 276 residues: Secreted RxLR effector protein 150 (276 aa).

Positions 1–18 (MRNIAFLIGLFFIGYSSC) are cleaved as a signal peptide. Positions 49–64 (RTLQADDRERILAEER) match the RxLR-dEER motif.

Belongs to the RxLR effector family.

The protein resides in the secreted. The protein localises to the host nucleus. Its subcellular location is the host cytoplasm. Secreted effector that partially suppresses the host cell death induced by cell death-inducing proteins. This chain is Secreted RxLR effector protein 150, found in Plasmopara viticola (Downy mildew of grapevine).